Reading from the N-terminus, the 121-residue chain is MSITNEQILDAIAEMSVMQVVELISAMEEKFGVSAAAAVVSGPAAAAAVEEQTEFNVILAAAGANKVAVIKAVRGATGLGLKEAKALVDGAPASVKEAVSKEEAEALKKELEEAGATVEVK.

The protein belongs to the bacterial ribosomal protein bL12 family. In terms of assembly, homodimer. Part of the ribosomal stalk of the 50S ribosomal subunit. Forms a multimeric L10(L12)X complex, where L10 forms an elongated spine to which 2 to 4 L12 dimers bind in a sequential fashion. Binds GTP-bound translation factors.

Functionally, forms part of the ribosomal stalk which helps the ribosome interact with GTP-bound translation factors. Is thus essential for accurate translation. The chain is Large ribosomal subunit protein bL12 from Vibrio cholerae serotype O1 (strain ATCC 39541 / Classical Ogawa 395 / O395).